Reading from the N-terminus, the 894-residue chain is Desmocollin-1 (894 aa).

Residues M1 to A29 form the signal peptide. A propeptide spanning residues C30–R134 is cleaved from the precursor. Cadherin domains lie at R135–F242, E243–F354, T355–C471, H472–P575, and Q576–D682. The Extracellular segment spans residues R135–R691. A glycan (N-linked (GlcNAc...) asparagine) is linked at N165. The residue at position 385 (T385) is a Phosphothreonine. An N-linked (GlcNAc...) asparagine glycan is attached at N546. A helical membrane pass occupies residues W692 to V714. At T715–K894 the chain is on the cytoplasmic side.

Binds to JUP/plakoglobin. In terms of tissue distribution, strongly expressed in epidermis, less in lymph node and tongue.

It localises to the cell membrane. It is found in the cell junction. The protein localises to the desmosome. A component of desmosome cell-cell junctions which are required for positive regulation of cellular adhesion. Required for desmosome adhesion strength between the granular layers of the epidermis, as a result moderates epidermal proliferation and differentiation. Is therefore required to maintain postnatal epidermal barrier function and normal hair follicle morphology into adulthood. The polypeptide is Desmocollin-1 (DSC1) (Homo sapiens (Human)).